The sequence spans 108 residues: UPF0060 membrane protein Msil_1658 (108 aa).

The next 4 membrane-spanning stretches (helical) occupy residues 5 to 25, 31 to 51, 62 to 82, and 88 to 108; these read LVYV…WAWL, SLWL…LTLI, AYGG…EGVW, and LGGA…PRPA.

Belongs to the UPF0060 family.

It localises to the cell inner membrane. In Methylocella silvestris (strain DSM 15510 / CIP 108128 / LMG 27833 / NCIMB 13906 / BL2), this protein is UPF0060 membrane protein Msil_1658.